The chain runs to 484 residues: Bifunctional protein GlmU (484 aa).

The pyrophosphorylase stretch occupies residues 1-240; it reads MSNPHSSAVI…HRELAGVNDR (240 aa). UDP-N-acetyl-alpha-D-glucosamine is bound by residues 12 to 15, Lys26, Gln83, and 88 to 89; these read LAAG and GT. Position 113 (Asp113) interacts with Mg(2+). Gly150, Glu165, Asn180, and Asn238 together coordinate UDP-N-acetyl-alpha-D-glucosamine. Asn238 provides a ligand contact to Mg(2+). The linker stretch occupies residues 241–261; the sequence is VQLAQAGKILNQRLVEDAMRN. Residues 262–484 are N-acetyltransferase; it reads GATIVDPDTT…QAHAHETKEG (223 aa). Positions 343 and 361 each coordinate UDP-N-acetyl-alpha-D-glucosamine. The active-site Proton acceptor is the His373. UDP-N-acetyl-alpha-D-glucosamine contacts are provided by Tyr376 and Asn387. Residues Ala390, 396-397, Ser415, and Ala433 each bind acetyl-CoA; that span reads NY. The segment at 461 to 484 is disordered; that stretch reads EKNRPGTPAADAARQAHAHETKEG.

This sequence in the N-terminal section; belongs to the N-acetylglucosamine-1-phosphate uridyltransferase family. It in the C-terminal section; belongs to the transferase hexapeptide repeat family. Homotrimer. Mg(2+) is required as a cofactor.

The protein localises to the cytoplasm. It carries out the reaction alpha-D-glucosamine 1-phosphate + acetyl-CoA = N-acetyl-alpha-D-glucosamine 1-phosphate + CoA + H(+). It catalyses the reaction N-acetyl-alpha-D-glucosamine 1-phosphate + UTP + H(+) = UDP-N-acetyl-alpha-D-glucosamine + diphosphate. The protein operates within nucleotide-sugar biosynthesis; UDP-N-acetyl-alpha-D-glucosamine biosynthesis; N-acetyl-alpha-D-glucosamine 1-phosphate from alpha-D-glucosamine 6-phosphate (route II): step 2/2. It participates in nucleotide-sugar biosynthesis; UDP-N-acetyl-alpha-D-glucosamine biosynthesis; UDP-N-acetyl-alpha-D-glucosamine from N-acetyl-alpha-D-glucosamine 1-phosphate: step 1/1. Its pathway is bacterial outer membrane biogenesis; LPS lipid A biosynthesis. In terms of biological role, catalyzes the last two sequential reactions in the de novo biosynthetic pathway for UDP-N-acetylglucosamine (UDP-GlcNAc). The C-terminal domain catalyzes the transfer of acetyl group from acetyl coenzyme A to glucosamine-1-phosphate (GlcN-1-P) to produce N-acetylglucosamine-1-phosphate (GlcNAc-1-P), which is converted into UDP-GlcNAc by the transfer of uridine 5-monophosphate (from uridine 5-triphosphate), a reaction catalyzed by the N-terminal domain. The protein is Bifunctional protein GlmU of Corynebacterium diphtheriae (strain ATCC 700971 / NCTC 13129 / Biotype gravis).